A 153-amino-acid chain; its full sequence is Ribosomal RNA large subunit methyltransferase H (153 aa).

Residues leucine 75, glycine 102, and 121–126 (LSKLTL) contribute to the S-adenosyl-L-methionine site.

This sequence belongs to the RNA methyltransferase RlmH family. Homodimer.

It is found in the cytoplasm. It carries out the reaction pseudouridine(1915) in 23S rRNA + S-adenosyl-L-methionine = N(3)-methylpseudouridine(1915) in 23S rRNA + S-adenosyl-L-homocysteine + H(+). In terms of biological role, specifically methylates the pseudouridine at position 1915 (m3Psi1915) in 23S rRNA. The chain is Ribosomal RNA large subunit methyltransferase H from Campylobacter jejuni (strain RM1221).